We begin with the raw amino-acid sequence, 577 residues long: Aspartate--tRNA(Asp/Asn) ligase (577 aa).

An L-aspartate-binding site is contributed by Glu171. Residues 195–198 (QLFK) are aspartate. Arg217 provides a ligand contact to L-aspartate. ATP contacts are provided by residues 217-219 (RDE) and Gln226. His444 serves as a coordination point for L-aspartate. Glu474 is a binding site for ATP. Residue Arg481 participates in L-aspartate binding. 526–529 (GFDR) serves as a coordination point for ATP.

The protein belongs to the class-II aminoacyl-tRNA synthetase family. Type 1 subfamily. In terms of assembly, homodimer.

It localises to the cytoplasm. The enzyme catalyses tRNA(Asx) + L-aspartate + ATP = L-aspartyl-tRNA(Asx) + AMP + diphosphate. Aspartyl-tRNA synthetase with relaxed tRNA specificity since it is able to aspartylate not only its cognate tRNA(Asp) but also tRNA(Asn). Reaction proceeds in two steps: L-aspartate is first activated by ATP to form Asp-AMP and then transferred to the acceptor end of tRNA(Asp/Asn). This Helicobacter pylori (strain HPAG1) protein is Aspartate--tRNA(Asp/Asn) ligase.